Here is a 303-residue protein sequence, read N- to C-terminus: Ribonuclease Z (303 aa).

H61, H63, D65, H66, H138, D206, and H265 together coordinate Zn(2+). D65 serves as the catalytic Proton acceptor.

It belongs to the RNase Z family. In terms of assembly, homodimer. Requires Zn(2+) as cofactor.

The catalysed reaction is Endonucleolytic cleavage of RNA, removing extra 3' nucleotides from tRNA precursor, generating 3' termini of tRNAs. A 3'-hydroxy group is left at the tRNA terminus and a 5'-phosphoryl group is left at the trailer molecule.. Zinc phosphodiesterase, which displays some tRNA 3'-processing endonuclease activity. Probably involved in tRNA maturation, by removing a 3'-trailer from precursor tRNA. The sequence is that of Ribonuclease Z from Agathobacter rectalis (strain ATCC 33656 / DSM 3377 / JCM 17463 / KCTC 5835 / VPI 0990) (Eubacterium rectale).